Consider the following 412-residue polypeptide: Serine hydroxymethyltransferase (412 aa).

Residues Leu-116 and 120–122 each bind (6S)-5,6,7,8-tetrahydrofolate; that span reads GHL. Lys-225 is modified (N6-(pyridoxal phosphate)lysine). (6S)-5,6,7,8-tetrahydrofolate is bound by residues Glu-241 and 350-352; that span reads SPF.

Belongs to the SHMT family. As to quaternary structure, homodimer. It depends on pyridoxal 5'-phosphate as a cofactor.

It localises to the cytoplasm. It carries out the reaction (6R)-5,10-methylene-5,6,7,8-tetrahydrofolate + glycine + H2O = (6S)-5,6,7,8-tetrahydrofolate + L-serine. The protein operates within one-carbon metabolism; tetrahydrofolate interconversion. Its pathway is amino-acid biosynthesis; glycine biosynthesis; glycine from L-serine: step 1/1. In terms of biological role, catalyzes the reversible interconversion of serine and glycine with tetrahydrofolate (THF) serving as the one-carbon carrier. This reaction serves as the major source of one-carbon groups required for the biosynthesis of purines, thymidylate, methionine, and other important biomolecules. Also exhibits THF-independent aldolase activity toward beta-hydroxyamino acids, producing glycine and aldehydes, via a retro-aldol mechanism. The chain is Serine hydroxymethyltransferase from Enterococcus faecalis (strain ATCC 700802 / V583).